The chain runs to 170 residues: Translation machinery-associated protein 16 homolog (170 aa).

The protein belongs to the TMA16 family.

The chain is Translation machinery-associated protein 16 homolog from Dictyostelium discoideum (Social amoeba).